Reading from the N-terminus, the 331-residue chain is Gamma-parvin (331 aa).

Met-1 carries the N-acetylmethionine modification. The tract at residues Glu-17 to Lys-39 is disordered. Calponin-homology (CH) domains lie at Glu-44–Gln-151 and Asn-210–Thr-317.

Belongs to the parvin family. In terms of assembly, interacts with ILK; the interaction promotes the establishment of cell polarity required for leukocyte migration. Interacts with ARHGEF6; the guanine nucleotide exchange factor activity of ARHGEF6 is essential for the PARVG-induced enhancement of cell spreading. In terms of tissue distribution, expressed predominantly in lymphoid organs, including spleen, thymus, lymph node, bone marrow and peripheral blood leukocytes and moderately in the digestive tract, including stomach, duodenum, jejunum, ileum, ileocecum and appendix, as well as in lung and liver. Also expressed in tumors, but at a lower level than in the corresponding normal tissues.

It is found in the cell junction. The protein resides in the focal adhesion. It localises to the cell membrane. The protein localises to the cytoplasm. Its subcellular location is the cytoskeleton. In terms of biological role, plays a role with ILK in promoting the cell adhesion and spreading of leukocytes. This Homo sapiens (Human) protein is Gamma-parvin (PARVG).